A 376-amino-acid polypeptide reads, in one-letter code: Chaperone protein DnaJ (376 aa).

Positions Asp5 to Gly70 constitute a J domain. The CR-type zinc finger occupies Gly131–Thr209. Residues Cys144, Cys147, Cys161, Cys164, Cys183, Cys186, Cys197, and Cys200 each coordinate Zn(2+). CXXCXGXG motif repeat units follow at residues Cys144–Gly151, Cys161–Gly168, Cys183–Gly190, and Cys197–Gly204.

Belongs to the DnaJ family. In terms of assembly, homodimer. Zn(2+) serves as cofactor.

The protein resides in the cytoplasm. Its function is as follows. Participates actively in the response to hyperosmotic and heat shock by preventing the aggregation of stress-denatured proteins and by disaggregating proteins, also in an autonomous, DnaK-independent fashion. Unfolded proteins bind initially to DnaJ; upon interaction with the DnaJ-bound protein, DnaK hydrolyzes its bound ATP, resulting in the formation of a stable complex. GrpE releases ADP from DnaK; ATP binding to DnaK triggers the release of the substrate protein, thus completing the reaction cycle. Several rounds of ATP-dependent interactions between DnaJ, DnaK and GrpE are required for fully efficient folding. Also involved, together with DnaK and GrpE, in the DNA replication of plasmids through activation of initiation proteins. The protein is Chaperone protein DnaJ of Tolumonas auensis (strain DSM 9187 / NBRC 110442 / TA 4).